The following is a 166-amino-acid chain: NAD(P)H-quinone oxidoreductase subunit I, chloroplastic (166 aa).

4Fe-4S ferredoxin-type domains follow at residues Gly55–Lys84 and Leu95–Glu124. Residues Cys64, Cys67, Cys70, Cys74, Cys104, Cys107, Cys110, and Cys114 each contribute to the [4Fe-4S] cluster site.

This sequence belongs to the complex I 23 kDa subunit family. In terms of assembly, NDH is composed of at least 16 different subunits, 5 of which are encoded in the nucleus. [4Fe-4S] cluster serves as cofactor.

Its subcellular location is the plastid. It is found in the chloroplast thylakoid membrane. It carries out the reaction a plastoquinone + NADH + (n+1) H(+)(in) = a plastoquinol + NAD(+) + n H(+)(out). It catalyses the reaction a plastoquinone + NADPH + (n+1) H(+)(in) = a plastoquinol + NADP(+) + n H(+)(out). NDH shuttles electrons from NAD(P)H:plastoquinone, via FMN and iron-sulfur (Fe-S) centers, to quinones in the photosynthetic chain and possibly in a chloroplast respiratory chain. The immediate electron acceptor for the enzyme in this species is believed to be plastoquinone. Couples the redox reaction to proton translocation, and thus conserves the redox energy in a proton gradient. This is NAD(P)H-quinone oxidoreductase subunit I, chloroplastic from Stevia rebaudiana (Stevia).